The following is a 300-amino-acid chain: Small ribosomal subunit protein uS2 (300 aa).

Residues 278-300 are disordered; it reads GEAQTGNEGWGTEAAAPAATTQW.

Belongs to the universal ribosomal protein uS2 family. Component of the small ribosomal subunit. Mature ribosomes consist of a small (40S) and a large (60S) subunit. The 40S subunit contains about 33 different proteins and 1 molecule of RNA (18S). The 60S subunit contains about 49 different proteins and 3 molecules of RNA (25S, 5.8S and 5S). Interacts with rps21.

The protein resides in the cytoplasm. Required for the assembly and/or stability of the 40S ribosomal subunit. Required for the processing of the 20S rRNA-precursor to mature 18S rRNA in a late step of the maturation of 40S ribosomal subunits. The polypeptide is Small ribosomal subunit protein uS2 (rps0) (Pyrenophora tritici-repentis (strain Pt-1C-BFP) (Wheat tan spot fungus)).